We begin with the raw amino-acid sequence, 402 residues long: Deoxyguanosinetriphosphate triphosphohydrolase-like protein (402 aa).

The tract at residues 20-39 is disordered; the sequence is PAFSRGRLVPEPESPTRTPF. The HD domain maps to 73–217; sequence RLTHTIEVAQ…AAIADDIAYN (145 aa).

The protein belongs to the dGTPase family. Type 2 subfamily.

This chain is Deoxyguanosinetriphosphate triphosphohydrolase-like protein, found in Brucella canis (strain ATCC 23365 / NCTC 10854 / RM-666).